A 323-amino-acid chain; its full sequence is MKTTFLDFEQPIAELEAKIEELRFVQDDSAVDISEEIERLSKKSQQLTKDLYANLTPWQVSQIARHPQRPYTLDYVAELFTDFHELHGDRAFADDLSIVGGLARFGGHPCMVIGHQKGRDTKERAARNFGMPRPEGYRKAERLMRLAEKFGLPIFTFVDTPGAYPGIGAEERGQSEAIGRNLYVMAELKTPIITTVIGEGGSGGALAIAVADTVMMLQFSTYSVISPEGCASILWKSAAKAPEAAEALGLTAHRLKALGLIDKIINEPLGGAHRDPKGMAALLRRALADSLRQFQGMSIDALRERRFERLMAYGKFKETTPGA.

Residues 39–293 enclose the CoA carboxyltransferase C-terminal domain; that stretch reads RLSKKSQQLT…RRALADSLRQ (255 aa).

This sequence belongs to the AccA family. Acetyl-CoA carboxylase is a heterohexamer composed of biotin carboxyl carrier protein (AccB), biotin carboxylase (AccC) and two subunits each of ACCase subunit alpha (AccA) and ACCase subunit beta (AccD).

It localises to the cytoplasm. The enzyme catalyses N(6)-carboxybiotinyl-L-lysyl-[protein] + acetyl-CoA = N(6)-biotinyl-L-lysyl-[protein] + malonyl-CoA. The protein operates within lipid metabolism; malonyl-CoA biosynthesis; malonyl-CoA from acetyl-CoA: step 1/1. Component of the acetyl coenzyme A carboxylase (ACC) complex. First, biotin carboxylase catalyzes the carboxylation of biotin on its carrier protein (BCCP) and then the CO(2) group is transferred by the carboxyltransferase to acetyl-CoA to form malonyl-CoA. In Burkholderia multivorans (strain ATCC 17616 / 249), this protein is Acetyl-coenzyme A carboxylase carboxyl transferase subunit alpha.